The chain runs to 1019 residues: Pleckstrin homology domain-containing family M member 2 (1019 aa).

Position 1 is an N-acetylmethionine (M1). The interval 1–310 (MEPGEVKDRI…LDPPDACTEL (310 aa)) is interaction with KIF5B. Residues 36 to 158 (RNHDKVLQRL…IRFELDLDAP (123 aa)) form the RUN domain. Disordered stretches follow at residues 230–458 (SVPS…SEGL), 471–525 (SPST…REAQ), and 557–581 (QPSP…SEMV). 2 stretches are compositionally biased toward polar residues: residues 243-272 (DTVS…QNPF) and 279-291 (TVSS…VHTT). The span at 315–327 (VTKKKKIGKKKKS) shows a compositional bias: basic residues. Over residues 417–427 (LNGQLDPSTWC) the composition is skewed to polar residues. A Phosphoserine modification is found at S441. Over residues 516–525 (PLEDTTREAQ) the composition is skewed to basic and acidic residues. An interaction with sifA region spans residues 762 to 885 (PCHCSPPEGT…VIPQGVAPSP (124 aa)). In terms of domain architecture, PH spans 771–873 (TITKEGMLHY…WMQHLCQAVS (103 aa)).

As to quaternary structure, interacts with KLC2 (via TPR repeats). Interacts with KIF5B. Interacts with BORCS5. Interacts (via RUN domain) with ARL8B (GTP-bound form); PLEKHM1 and PLEKHM2 compete for interaction with ARL8B. Interacts with ARL8A. (Microbial infection) Interacts with the S.typhimurium sifA protein; required for S.typhimurium infection.

It localises to the cytoplasm. The protein localises to the lysosome membrane. Plays a role in lysosomes movement and localization at the cell periphery acting as an effector of ARL8B. Required for ARL8B to exert its effects on lysosome location, recruits kinesin-1 to lysosomes and hence direct their movement toward microtubule plus ends. Binding to ARL8B provides a link from lysosomal membranes to plus-end-directed motility. Critical factor involved in NK cell-mediated cytotoxicity. Drives the polarization of cytolytic granules and microtubule-organizing centers (MTOCs) toward the immune synapse between effector NK lymphocytes and target cells. Required for maintenance of the Golgi apparatus organization. May play a role in membrane tubulation. The sequence is that of Pleckstrin homology domain-containing family M member 2 from Homo sapiens (Human).